We begin with the raw amino-acid sequence, 172 residues long: Myosin regulatory light chain 2, smooth muscle minor isoform (172 aa).

At Ser2 the chain carries N-acetylserine. Position 19 is a phosphothreonine; by MLCK (Thr19). Phosphoserine; by MLCK is present on Ser20. EF-hand domains lie at 29–64 (SQIQ…LGKN), 98–133 (DPED…MGDR), and 134–169 (FTDE…GAKD). Ca(2+)-binding residues include Asp42, Asn44, Asp46, and Asp53.

In terms of assembly, myosin is a hexamer of 2 heavy chains and 4 light chains. Post-translationally, phosphorylation increases the actin-activated myosin ATPase activity and thereby regulates the contractile activity.

Functionally, myosin regulatory subunit that plays an important role in regulation of both smooth muscle and nonmuscle cell contractile activity. Implicated in cytokinesis, receptor capping, and cell locomotion. This chain is Myosin regulatory light chain 2, smooth muscle minor isoform, found in Gallus gallus (Chicken).